The following is a 155-amino-acid chain: Putative methyl-CpG-binding domain protein 12 (155 aa).

The CW-type zinc finger occupies 1-53 (MVQCTDCKKWRLIPSMQHYNIIKETQLQTPFVCGTTSGWTPNMSCNVPQDGTT). Positions 3-45 (QCTDCKKWRLIPSMQHYNIIKETQLQTPFVCGTTSGWTPNMSC) match the MBD-associated domain (MAD) motif. Residues Cys4, Cys7, Cys33, and Cys45 each coordinate Zn(2+). The region spanning 53–126 (TCDTWPSIPP…SQFSFQIPKP (74 aa)) is the MBD domain. Residues 130-155 (NYVKKRTRPVKRRKSSKDNNCEKGKK) are disordered. The span at 133–144 (KKRTRPVKRRKS) shows a compositional bias: basic residues. A Nuclear localization signal motif is present at residues 140 to 147 (KRRKSSKD). Residues 145–155 (SKDNNCEKGKK) are compositionally biased toward basic and acidic residues.

The protein resides in the nucleus. Its function is as follows. Probable transcriptional regulator. The protein is Putative methyl-CpG-binding domain protein 12 (MBD12) of Arabidopsis thaliana (Mouse-ear cress).